Consider the following 417-residue polypeptide: D-galactonate dehydratase family member SeV_A0456 (417 aa).

Substrate-binding residues include glutamine 43 and histidine 127. Residue tyrosine 158 is the Proton donor/acceptor of the active site. Residue aspartate 223 coordinates Mg(2+). Residue histidine 225 is the Proton donor/acceptor of the active site. Glutamate 249 and glutamate 275 together coordinate Mg(2+). 5 residues coordinate substrate: glutamate 275, arginine 296, histidine 325, aspartate 329, and glutamate 352.

This sequence belongs to the mandelate racemase/muconate lactonizing enzyme family. GalD subfamily. The cofactor is Mg(2+).

The enzyme catalyses D-gluconate = 2-dehydro-3-deoxy-D-gluconate + H2O. Has low D-gluconate dehydratase activity (in vitro), suggesting that it has no significant role in D-gluconate degradation in vivo. Has no detectable activity with a panel of 70 other acid sugars (in vitro). The polypeptide is D-galactonate dehydratase family member SeV_A0456 (Salmonella virchow (strain SL491)).